Consider the following 193-residue polypeptide: Sarcoplasmic calcium-binding protein, alpha chain (193 aa).

IgE-binding epitope regions lie at residues K10–R36 and D49–N72. 3 EF-hand domains span residues M16–I40, I57–G92, and A101–F136. The Ca(2+) site is built by D18, D20, N22, D29, D70, N72, D74, E76, E81, D114, N116, D118, K120, and E125. The tract at residues C130–N147 is igE-binding epitope.

As to quaternary structure, SCPs from crayfish, lobster, and shrimp are polymorphic dimers; three isotypes (alpha-alpha, alpha-beta, and beta-beta) have been identified. In terms of tissue distribution, expressed in tail muscle (at protein level).

Like parvalbumins, SCPs seem to be more abundant in fast contracting muscles, but no functional relationship can be established from this distribution. The protein is Sarcoplasmic calcium-binding protein, alpha chain of Penaeus vannamei (Whiteleg shrimp).